The following is a 308-amino-acid chain: Elongation factor Ts (308 aa).

The interval Thr80–Val83 is involved in Mg(2+) ion dislocation from EF-Tu.

Belongs to the EF-Ts family.

It localises to the cytoplasm. Its function is as follows. Associates with the EF-Tu.GDP complex and induces the exchange of GDP to GTP. It remains bound to the aminoacyl-tRNA.EF-Tu.GTP complex up to the GTP hydrolysis stage on the ribosome. The sequence is that of Elongation factor Ts from Rhizobium etli (strain CIAT 652).